A 901-amino-acid polypeptide reads, in one-letter code: Valine--tRNA ligase (901 aa).

Positions 1 to 37 (MLPGCYTHRLNMSDTQDPPQDESTTDESADALDGEYD) are disordered. Residues 19–35 (PQDESTTDESADALDGE) show a composition bias toward acidic residues. Residues 72–82 (PTVSGNLHMGH) carry the 'HIGH' region motif. Residues 572–576 (AMSKS) carry the 'KMSKS' region motif. Residue K575 participates in ATP binding.

It belongs to the class-I aminoacyl-tRNA synthetase family. ValS type 2 subfamily.

It is found in the cytoplasm. It carries out the reaction tRNA(Val) + L-valine + ATP = L-valyl-tRNA(Val) + AMP + diphosphate. Catalyzes the attachment of valine to tRNA(Val). As ValRS can inadvertently accommodate and process structurally similar amino acids such as threonine, to avoid such errors, it has a 'posttransfer' editing activity that hydrolyzes mischarged Thr-tRNA(Val) in a tRNA-dependent manner. In Haloarcula marismortui (strain ATCC 43049 / DSM 3752 / JCM 8966 / VKM B-1809) (Halobacterium marismortui), this protein is Valine--tRNA ligase.